A 137-amino-acid chain; its full sequence is uncharacterized protein (137 aa).

The signal sequence occupies residues 1-19; it reads MVAFYGIFLFGTVYLFGLA.

This is an uncharacterized protein from Acanthamoeba polyphaga (Amoeba).